A 103-amino-acid polypeptide reads, in one-letter code: Large ribosomal subunit protein eL30 (103 aa).

It belongs to the eukaryotic ribosomal protein eL30 family.

The sequence is that of Large ribosomal subunit protein eL30 from Methanosarcina mazei (strain ATCC BAA-159 / DSM 3647 / Goe1 / Go1 / JCM 11833 / OCM 88) (Methanosarcina frisia).